The chain runs to 54 residues: Protein GndA (54 aa).

A helical transmembrane segment spans residues 28-50; the sequence is LFVVIVSFQQRALTSSVPVFLAV.

The protein resides in the cell inner membrane. The polypeptide is Protein GndA (Escherichia coli (strain K12)).